The chain runs to 56 residues: Large ribosomal subunit protein bL33 (56 aa).

It belongs to the bacterial ribosomal protein bL33 family.

This chain is Large ribosomal subunit protein bL33, found in Campylobacter hominis (strain ATCC BAA-381 / DSM 21671 / CCUG 45161 / LMG 19568 / NCTC 13146 / CH001A).